Consider the following 239-residue polypeptide: Tungstate uptake system permease protein TupB (239 aa).

The 197-residue stretch at 37 to 233 folds into the ABC transmembrane type-1 domain; that stretch reads IKTTLLSSSI…LIAFCLNFIT (197 aa). The next 5 membrane-spanning stretches (helical) occupy residues 45 to 65, 76 to 96, 114 to 134, 168 to 188, and 212 to 232; these read SISI…LGFF, IVDT…YALI, LILG…SNLI, ISVV…AMIV, and FASG…LNFI.

This sequence belongs to the binding-protein-dependent transport system permease family. As to quaternary structure, the complex is composed of two ATP-binding proteins (TupC), two transmembrane proteins (TupB) and a solute-binding protein (TupA).

It is found in the cell inner membrane. In terms of biological role, part of an ABC transporter complex involved in ultra-high affinity tungstate uptake. Probably responsible for the translocation of the substrate across the membrane. The sequence is that of Tungstate uptake system permease protein TupB from Campylobacter jejuni subsp. jejuni serotype O:2 (strain ATCC 700819 / NCTC 11168).